The primary structure comprises 189 residues: Marginal zone B- and B1-cell-specific protein (189 aa).

The N-terminal stretch at 1–22 (MRLSLPLLLLLLGAWAIPGGLG) is a signal peptide. 3 cysteine pairs are disulfide-bonded: cysteine 50–cysteine 178, cysteine 53–cysteine 171, and cysteine 95–cysteine 143. Positions 186-189 (REEL) match the Prevents secretion from ER motif.

This sequence belongs to the MZB1 family. Part of the ER chaperone complex, a multi-protein complex in the endoplasmic reticulum containing a large number of molecular chaperones which associates with unassembled incompletely folded immunoglobulin heavy chains. Isoform 2 interacts with CASP2 and CASP9. Interacts with HSP90B1 and PDIA3 in a calcium-dependent manner. Forms an interchain disulfide bond with IgM monomers. As to expression, widely expressed with highest levels in adult brain, small intestine and lymphoid tissues such as thymus and spleen. Expression is frequently lower in intestinal-type gastric cancer. In obese patients, more abundant in omental than in subcutaneous fat.

It is found in the endoplasmic reticulum lumen. The protein resides in the secreted. It localises to the cytoplasm. Associates with immunoglobulin M (IgM) heavy and light chains and promotes IgM assembly and secretion. May exert its effect by acting as a molecular chaperone or as an oxidoreductase as it displays a low level of oxidoreductase activity. Isoform 2 may be involved in regulation of apoptosis. Helps to diversify peripheral B-cell functions by regulating Ca(2+) stores, antibody secretion and integrin activation. Its function is as follows. Acts as a hormone-regulated adipokine/pro-inflammatory cytokine that is implicated in causing chronic inflammation, affecting cellular expansion and blunting insulin response in adipocytes. May have a role in the onset of insulin resistance. The polypeptide is Marginal zone B- and B1-cell-specific protein (MZB1) (Homo sapiens (Human)).